We begin with the raw amino-acid sequence, 160 residues long: Endoribonuclease YbeY (160 aa).

His112, His116, and His122 together coordinate Zn(2+). Residues 141 to 160 (ELGHPDPYACDDEEPPSKEK) are disordered.

Belongs to the endoribonuclease YbeY family. The cofactor is Zn(2+).

Its subcellular location is the cytoplasm. Its function is as follows. Single strand-specific metallo-endoribonuclease involved in late-stage 70S ribosome quality control and in maturation of the 3' terminus of the 16S rRNA. The polypeptide is Endoribonuclease YbeY (Pseudomonas aeruginosa (strain UCBPP-PA14)).